Here is a 349-residue protein sequence, read N- to C-terminus: DNA integrity scanning protein DisA (349 aa).

The 141-residue stretch at lysine 3–glutamate 143 folds into the DAC domain. Residues glycine 70, valine 88, and threonine 101–threonine 105 each bind ATP.

The protein belongs to the DisA family. As to quaternary structure, homooctamer. The cofactor is Mg(2+).

It catalyses the reaction 2 ATP = 3',3'-c-di-AMP + 2 diphosphate. Functionally, participates in a DNA-damage check-point. DisA forms globular foci that rapidly scan along the chromosomes searching for lesions. In terms of biological role, also has diadenylate cyclase activity, catalyzing the condensation of 2 ATP molecules into cyclic di-AMP (c-di-AMP). c-di-AMP likely acts as a signaling molecule that may couple DNA integrity with a cellular process. The polypeptide is DNA integrity scanning protein DisA (Fusobacterium nucleatum subsp. nucleatum (strain ATCC 25586 / DSM 15643 / BCRC 10681 / CIP 101130 / JCM 8532 / KCTC 2640 / LMG 13131 / VPI 4355)).